Reading from the N-terminus, the 136-residue chain is Invertebrate-type lysozyme (136 aa).

The first 11 residues, Met-1–Asp-11, serve as a signal peptide directing secretion. The 117-residue stretch at Pro-14–Cys-130 folds into the I-type lysozyme domain. 7 disulfide bridges follow: Cys-21–Cys-98, Cys-24–Cys-130, Cys-26–Cys-33, Cys-38–Cys-47, Cys-60–Cys-80, Cys-70–Cys-76, and Cys-94–Cys-112. Residue Glu-29 is the Proton donor of the active site. Asp-41 serves as the catalytic Nucleophile. Lys-53–Asp-59 contributes to the substrate binding site. An N-linked (GlcNAc...) asparagine glycan is attached at Asn-75. Residues Tyr-84, Tyr-92, His-105 to Gly-107, and Lys-119 contribute to the substrate site.

In terms of assembly, homodimer in its autoinhibited state. Active as monomer.

It is found in the secreted. It catalyses the reaction Hydrolysis of (1-&gt;4)-beta-linkages between N-acetylmuramic acid and N-acetyl-D-glucosamine residues in a peptidoglycan and between N-acetyl-D-glucosamine residues in chitodextrins.. Its activity is regulated as follows. Chitinase activity is activated by high salt concentrations which cause the release of the monomer from the autoinhibited homodimer. In terms of biological role, bacteriolytic activity against Gram-positive bacterium M.luteus and thereby probably protects against bacterial infection. Also has chitinase activity. May act as an ispopeptidase, cleaving isopeptide bonds between the side chains of Lys and Gln residues in proteins or in the cross-linking peptide of peptidoglycan in bacterial cell walls. This chain is Invertebrate-type lysozyme, found in Ruditapes philippinarum (Japanese carpet shell).